Reading from the N-terminus, the 343-residue chain is F17c-G fimbrial adhesin (343 aa).

An N-terminal signal peptide occupies residues 1–22 (MTNFYKVFLAVFILVCCNISHA). Residues 23–199 (AVSFIGSTEN…LNPFTLNDTV (177 aa)) are receptor-binding lectin domain. A carbohydrate-binding positions include 65–66 (AN), 110–111 (DT), and 138–141 (STQG). Residues Cys75 and Cys132 are joined by a disulfide bond. The interval 200 to 343 (TSCRLLTPSA…GISTFTFSYQ (144 aa)) is fimbrillin-binding domain. The segment at 287-307 (LKFGPDSPVKGNENQWQLSTG) is disordered. Positions 298–307 (NENQWQLSTG) are enriched in polar residues.

Belongs to the fimbrial protein family.

The protein resides in the fimbrium. Functionally, essential fimbrial adhesion factor that mediates binding to N-acetylglucosamine-containing receptors in the host intestinal microvilli, leading to colonization of the intestinal tissue, and diarrhea or septicemia. Also confers adhesiveness to laminin and basement membranes. This is F17c-G fimbrial adhesin (f17cG) from Escherichia coli.